The chain runs to 565 residues: MRQSKFFMPTLKEAPSDAVAESHKLMIRGGYIRQVTAGVYAYLPLGYRVLRKAEGIIEDEMEKINVPEMIMPHLLPATLWQESGRYKKYGAEMFKLKDRHGRESLLGPTHEETFTEIIAKNLKSYKQMPLALYQIQTKFRDENRPRFGLLRGREFVMLDGYSFAATRDQLDEQFDDQKSAYKRIFKRAGVTVHPVIADSGTMGGKNSTEFQAPAAIGEDTIATNEKGTYAANLEMAKSIDTFKQEPEDAKELTKVATPGCDTIEKLAKFLNVPATRIVKSILYIADDQKVLVLIRGDKQINEVKLGHVLDADEVHEADSADLKEITGSEKGGVGPVDADWADKIIADETVKDLYNVVVGAGETDYQFENANLDRDFKVDEFVDIRTANEGEPDPVDHLPLKFTTSIEVGHIFKLGTYYTKTMGADFLDQNGKAKPVIMGSYGIGVTRMLSAAVEQHLTEHGVAWPKEIAPFAIHIVQMKMNKEDQTELAEKLEKKFSEKYDVLYDDRKERAGVKFADADLVGAPIRITVGKKAADGIVEVKRPTDDKATEISIDELDKFVNQELG.

Belongs to the class-II aminoacyl-tRNA synthetase family. ProS type 1 subfamily. Homodimer.

The protein resides in the cytoplasm. It carries out the reaction tRNA(Pro) + L-proline + ATP = L-prolyl-tRNA(Pro) + AMP + diphosphate. In terms of biological role, catalyzes the attachment of proline to tRNA(Pro) in a two-step reaction: proline is first activated by ATP to form Pro-AMP and then transferred to the acceptor end of tRNA(Pro). As ProRS can inadvertently accommodate and process non-cognate amino acids such as alanine and cysteine, to avoid such errors it has two additional distinct editing activities against alanine. One activity is designated as 'pretransfer' editing and involves the tRNA(Pro)-independent hydrolysis of activated Ala-AMP. The other activity is designated 'posttransfer' editing and involves deacylation of mischarged Ala-tRNA(Pro). The misacylated Cys-tRNA(Pro) is not edited by ProRS. This Lactobacillus helveticus (strain DPC 4571) protein is Proline--tRNA ligase.